A 122-amino-acid chain; its full sequence is NADH-quinone oxidoreductase subunit A (122 aa).

Helical transmembrane passes span 10 to 30, 66 to 86, and 91 to 111; these read MIVL…LTLG, IFAL…PWAV, and LGLF…VGLA.

Belongs to the complex I subunit 3 family. As to quaternary structure, NDH-1 is composed of 14 different subunits. Subunits NuoA, H, J, K, L, M, N constitute the membrane sector of the complex.

The protein localises to the cell membrane. The enzyme catalyses a quinone + NADH + 5 H(+)(in) = a quinol + NAD(+) + 4 H(+)(out). NDH-1 shuttles electrons from NADH, via FMN and iron-sulfur (Fe-S) centers, to quinones in the respiratory chain. The immediate electron acceptor for the enzyme in this species is believed to be a menaquinone. Couples the redox reaction to proton translocation (for every two electrons transferred, four hydrogen ions are translocated across the cytoplasmic membrane), and thus conserves the redox energy in a proton gradient. The polypeptide is NADH-quinone oxidoreductase subunit A (Bacillus thuringiensis subsp. konkukian (strain 97-27)).